The sequence spans 430 residues: DD-carboxypeptidase/endopeptidase Mpg (430 aa).

H295, D299, and H375 together coordinate Zn(2+).

This sequence belongs to the peptidase M23B family. As to quaternary structure, monomer. Requires Zn(2+) as cofactor. Likely to be synthesized as a proenzyme. The cleavage of the N-terminal domain is probably required for the activation of the enzyme.

It is found in the cell outer membrane. Its activity is regulated as follows. Peptidoglycan (PG) degradation activity is completely inhibited by zinc chelating EDTA and phenanthroline. Its function is as follows. Has both endopeptidase and DD-carboxypeptidase activities. Degrades cell wall peptidoglycan (PG) to allow consummate expression of pili. Degrades N.gonorrhoeae and E.coli PG side chains in vitro. Required for proper piliation, which in turn is required for normal colony morphology, resistance to H(2)O(2) damage and defense against killing by human polymorphonuclear leukocytes (PMNs). Involved in type IV pilus biogenesis. Involved in resistance against non-oxidative killing by adherent CXCL8/IL8-primed human PMNs. Protects from killing by PMN-produced antimicrobial factors, which kill by a mechanism completely independent of reactive oxygen species (ROS) production of the PMNs. Provides protection against oxidative damage caused by peroxides H(2)O(2) and cumene hydroperoxide in vitro. The sequence is that of DD-carboxypeptidase/endopeptidase Mpg from Neisseria gonorrhoeae (strain ATCC 700825 / FA 1090).